The primary structure comprises 106 residues: MTYIIFAFAALFEIAGCFAFWAWLKLENPVWWLAPGMVSLALFAWILTLVPSEAAGRTFAAYGGIYILASLLWLWLVESRVPDRYDIGGALICLAGASLILFAPRG.

The next 4 helical transmembrane spans lie at Ile-4–Leu-24, Val-30–Val-50, Thr-58–Glu-78, and Asp-86–Gly-106.

Belongs to the UPF0060 family.

Its subcellular location is the cell inner membrane. The chain is UPF0060 membrane protein RL1530 from Rhizobium johnstonii (strain DSM 114642 / LMG 32736 / 3841) (Rhizobium leguminosarum bv. viciae).